A 339-amino-acid chain; its full sequence is Fructose-1,6-bisphosphatase class 1 (339 aa).

4 residues coordinate Mg(2+): Glu-101, Asp-120, Leu-122, and Asp-123. Substrate-binding positions include 123-126 (DGSS), Asn-215, and Lys-281. Glu-287 serves as a coordination point for Mg(2+).

The protein belongs to the FBPase class 1 family. In terms of assembly, homotetramer. Mg(2+) serves as cofactor.

The protein localises to the cytoplasm. It catalyses the reaction beta-D-fructose 1,6-bisphosphate + H2O = beta-D-fructose 6-phosphate + phosphate. The protein operates within carbohydrate biosynthesis; gluconeogenesis. The chain is Fructose-1,6-bisphosphatase class 1 from Polynucleobacter necessarius subsp. necessarius (strain STIR1).